The following is a 707-amino-acid chain: Solute carrier family 15 member 1 (707 aa).

A helical transmembrane segment spans residues 1 to 21 (MGMSKSLSCFGYPLSIFFIVV). Over 22 to 53 (NEFCERFSYYGMRALLILYFRNFIGWDDNLST) the chain is Extracellular. N-linked (GlcNAc...) asparagine glycosylation is present at Asn50. A helical membrane pass occupies residues 54–74 (VIYHTFVALCYLTPILGALIA). Topologically, residues 75–82 (DAWLGKFK) are cytoplasmic. A helical membrane pass occupies residues 83 to 103 (TIVWLSIVYTIGQAVTSLSSV). Over 104–118 (NELTDNNHDGTPDSL) the chain is Extracellular. The helical transmembrane segment at 119-139 (PVHVAVCMIGLLLIALGTGGI) threads the bilayer. Topologically, residues 140–161 (KPCVSAFGGDQFEEGQEKQRNR) are cytoplasmic. A helical membrane pass occupies residues 162–182 (FFSIFYLAINAGSLLSTIITP). At 183–198 (MVRVQQCGIHVKQACY) the chain is on the extracellular side. A helical transmembrane segment spans residues 199–219 (PLAFGIPAILMAVSLIVFIIG). The Cytoplasmic segment spans residues 220–276 (SGMYKKFKPQGNILSKVVKCICFAIKNRFRHRSKQFPKRAHWLDWAKEKYDERLIAQ). The helical transmembrane segment at 277 to 297 (IKMVTRVLFLYIPLPMFWALF) threads the bilayer. Residues 298–327 (DQQGSRWTLQATTMSGRIGILEIQPDQMQT) are Extracellular-facing. Residues 328–348 (VNTILIIILVPIMDAVVYPLI) form a helical membrane-spanning segment. Over 349–361 (AKCGLNFTSLKKM) the chain is Cytoplasmic. A helical membrane pass occupies residues 362–382 (TIGMFLASMAFVAAAILQVEI). Topologically, residues 383–583 (DKTLPVFPKA…PPNTMNMAWQ (201 aa)) are extracellular. Positions 383-583 (DKTLPVFPKA…PPNTMNMAWQ (201 aa)) are extracellular domain (ECD). N-linked (GlcNAc...) asparagine glycosylation is found at Asn439, Asn498, and Asn513. A helical transmembrane segment spans residues 584-604 (IPQYFLITSGEVVFSITGLEF). Topologically, residues 605–618 (SYSQAPSNMKSVLQ) are cytoplasmic. A helical membrane pass occupies residues 619–639 (AGWLLTVAVGNIIVLIVAGAG). At 640–644 (QINKQ) the chain is on the extracellular side. Residues 645-665 (WAEYILFAALLLVVCVIFAIM) form a helical membrane-spanning segment. At 666–707 (ARFYTYVNPAEIEAQFEEDEKKKNPEKNDLYPSLAPVSQTQM) the chain is on the cytoplasmic side. The segment at 682–707 (EEDEKKKNPEKNDLYPSLAPVSQTQM) is disordered. Residues 684-694 (DEKKKNPEKND) are compositionally biased toward basic and acidic residues.

This sequence belongs to the major facilitator superfamily. Proton-dependent oligopeptide transporter (POT/PTR) (TC 2.A.17) family. Interacts (via extracellular domain region) with trypsin. Intestine, kidney, liver and low in brain.

The protein localises to the apical cell membrane. The enzyme catalyses a dipeptide(out) + H(+)(out) = a dipeptide(in) + H(+)(in). It catalyses the reaction an L-amino acid tripeptide(out) + H(+)(out) = an L-amino acid tripeptide(in) + H(+)(in). The catalysed reaction is L-alanyl-L-lysine(out) + H(+)(out) = L-alanyl-L-lysine(in) + H(+)(in). It carries out the reaction L-alanyl-L-proline(out) + H(+)(out) = L-alanyl-L-proline(in) + H(+)(in). The enzyme catalyses L-alanyl-L-valine(out) + H(+)(out) = L-alanyl-L-valine(in) + H(+)(in). It catalyses the reaction carnosine(out) + H(+)(out) = carnosine(in) + H(+)(in). The catalysed reaction is glycyl-L-glutamine(out) + H(+)(out) = glycyl-L-glutamine(in) + H(+)(in). It carries out the reaction glycyl-L-leucine(out) + H(+)(out) = glycyl-L-leucine(in) + H(+)(in). The enzyme catalyses glycyl-L-proline(out) + H(+)(out) = glycyl-L-proline(in) + H(+)(in). It catalyses the reaction glycyl-sarcosine(out) + H(+)(out) = glycyl-sarcosine(in) + H(+)(in). The catalysed reaction is L-leucyl-L-leucine(out) + H(+)(out) = L-leucyl-L-leucine(in) + H(+)(in). It carries out the reaction L-leucyl-L-proline(out) + H(+)(out) = L-leucyl-L-proline(in) + H(+)(in). The enzyme catalyses L-phenylalanyl-L-leucine(out) + H(+)(out) = L-phenylalanyl-L-leucine(in) + H(+)(in). It catalyses the reaction L-phenylalanyl-L-phenylalanine(out) + H(+)(out) = L-phenylalanyl-L-phenylalanine(in) + H(+)(in). The catalysed reaction is L-lysyl-glycine(out) + H(+)(out) = L-lysyl-glycine(in) + H(+)(in). It carries out the reaction L-tyrosylglycine(out) + H(+)(out) = L-tyrosylglycine(in) + H(+)(in). The enzyme catalyses L-alanyl-L-aspartate(out) + 2 H(+)(out) = L-alanyl-L-aspartate(in) + 2 H(+)(in). It catalyses the reaction L-aspartyl-glycine(out) + 2 H(+)(out) = L-aspartyl-glycine(in) + 2 H(+)(in). The catalysed reaction is glycyl-L-aspartate(out) + 2 H(+)(out) = glycyl-L-aspartate(in) + 2 H(+)(in). It carries out the reaction glycyl-L-glutamate(out) + 2 H(+)(out) = glycyl-L-glutamate(in) + 2 H(+)(in). The enzyme catalyses L-alanyl-L-leucyl-L-alanine(out) + H(+)(out) = L-alanyl-L-leucyl-L-alanine(in) + H(+)(in). It catalyses the reaction L-alanyl-L-prolylglycine(out) + H(+)(out) = L-alanyl-L-prolylglycine(in) + H(+)(in). The catalysed reaction is glycylglycyl-L-isoleucine(out) + H(+)(out) = glycylglycyl-L-isoleucine(in) + H(+)(in). It carries out the reaction glycylglycyl-L-proline(out) + H(+)(out) = glycylglycyl-L-proline(in) + H(+)(in). The enzyme catalyses L-methionyl-L-phenylalanyl-L-methionine(out) + H(+)(out) = L-methionyl-L-phenylalanyl-L-methionine(in) + H(+)(in). It catalyses the reaction N-acetyl-D-muramoyl-L-alanyl-D-isoglutamine(out) + 2 H(+)(out) = N-acetyl-D-muramoyl-L-alanyl-D-isoglutamine(in) + 2 H(+)(in). The catalysed reaction is N(alpha)-formyl-L-methionyl-L-leucyl-L-phenylalanine(out) + 2 H(+)(out) = N(alpha)-formyl-L-methionyl-L-leucyl-L-phenylalanine(in) + 2 H(+)(in). Its function is as follows. Electrogenic proton-coupled amino-acid transporter that transports oligopeptides of 2 to 4 amino acids with a preference for dipeptides. Transports neutral and monovalently charged peptides with a proton to peptide stoichiometry of 1:1 or 2:1. Primarily responsible for the absorption of dietary di- and tripeptides from the small intestinal lumen. Mediates transepithelial transport of muramyl and N-formylated bacterial dipeptides contributing to recognition of pathogenic bacteria by the mucosal immune system. This chain is Solute carrier family 15 member 1 (SLC15A1), found in Oryctolagus cuniculus (Rabbit).